The primary structure comprises 2885 residues: Chromodomain-helicase-DNA-binding protein 9 (2885 aa).

A disordered region spans residues 173–195 (QCSSLHSQQSRSNLNPGQNSLGQ). K197 participates in a covalent cross-link: Glycyl lysine isopeptide (Lys-Gly) (interchain with G-Cter in SUMO2). Disordered regions lie at residues 242–263 (CSSH…CSVS), 283–347 (SLLQ…QGNY), and 479–677 (CLQR…QPLQ). 2 stretches are compositionally biased toward polar residues: residues 243-263 (SSHQ…CSVS) and 283-310 (SLLQ…NSFS). A compositionally biased stretch (low complexity) spans 323–334 (LLNPTPSLNSNN). 2 stretches are compositionally biased toward polar residues: residues 335–347 (FQIL…QGNY) and 483–505 (QPPS…TQVR). Residue K498 is modified to N6-acetyllysine. Composition is skewed to basic and acidic residues over residues 507-526 (MSEK…EKAN) and 534-544 (ARAKERGERNI). Phosphoserine is present on S549. Residues 572–592 (KPKDRDNKKPKTYSKLKEKTK) show a composition bias toward basic and acidic residues. K595 is covalently cross-linked (Glycyl lysine isopeptide (Lys-Gly) (interchain with G-Cter in SUMO2)). At S610 the chain carries Phosphoserine. Over residues 617–630 (AEQRSQHTFKEQHS) the composition is skewed to basic and acidic residues. The span at 631–643 (QKRRSNRQIKRKK) shows a compositional bias: basic residues. Basic and acidic residues predominate over residues 644–659 (YAEDAEGKQSEEEVKG). 2 consecutive Chromo domains span residues 689–760 (AIVD…HFLA) and 772–838 (VEVD…HLDR). The short motif at 867–871 (LNWLL) is the LXXLL motif 1 element. The 175-residue stretch at 871 to 1045 (LFNWYNRRNC…FSLLHFLEPL (175 aa)) folds into the Helicase ATP-binding domain. 884 to 891 (DEMGLGKT) provides a ligand contact to ATP. Residues 996 to 999 (DEAH) carry the DEAH box motif. The LXXLL motif 2 motif lies at 1035-1039 (LFSLL). The Helicase C-terminal domain maps to 1185–1336 (LIDKLLPKMK…KAVLQSMSGR (152 aa)). A disordered region spans residues 1460–1484 (KDELAELSEAESEGEEKPKLRRPCD). Residues 1464-1473 (AELSEAESEG) show a composition bias toward acidic residues. A phosphoserine mark is found at S1467 and S1471. The segment covering 1474 to 1484 (EEKPKLRRPCD) has biased composition (basic and acidic residues). Glycyl lysine isopeptide (Lys-Gly) (interchain with G-Cter in SUMO2) cross-links involve residues K1587, K1737, and K1902. S2025 carries the phosphoserine modification. An LXXLL motif 3 motif is present at residues 2030–2034 (LPRLL). K2037 is covalently cross-linked (Glycyl lysine isopeptide (Lys-Gly) (interchain with G-Cter in SUMO2)). Residues 2046–2238 (VKSESLTEEP…TQDSFQANNG (193 aa)) are disordered. Phosphoserine occurs at positions 2057 and 2058. A Glycyl lysine isopeptide (Lys-Gly) (interchain with G-Cter in SUMO2) cross-link involves residue K2073. 2 positions are modified to phosphoserine: S2074 and S2078. The segment covering 2083-2092 (VLSQATGDQK) has biased composition (polar residues). The segment covering 2093-2103 (SGGKSETDRRM) has biased composition (basic and acidic residues). Positions 2127 to 2193 (SQSSSDSDSD…SSSSSSSSSS (67 aa)) are enriched in low complexity. Positions 2201–2215 (DVQKREGTPHRKAYD) are enriched in basic and acidic residues. The span at 2220 to 2238 (ASLSTTQDETQDSFQANNG) shows a compositional bias: polar residues. Residues 2331–2471 (QMSKVKKHVR…LSYPQPQRIP (141 aa)) are binds A/T-rich DNA. Residues K2349, K2355, and K2360 each participate in a glycyl lysine isopeptide (Lys-Gly) (interchain with G-Cter in SUMO2) cross-link. Positions 2428-2435 (KKRRGRRR) are a.T hook-like. The tract at residues 2473–2494 (TESPVPVINLKDGTRLAGDDAP) is disordered. A compositionally biased stretch (basic and acidic residues) spans 2484–2494 (DGTRLAGDDAP). An LXXLL motif 4 motif is present at residues 2710–2714 (LPNLL). The interval 2724-2770 (AESGAEEKRGNDSKELEGKKERTESQSPENGGERCVPGSPSTSSTAA) is disordered. The span at 2728-2747 (AEEKRGNDSKELEGKKERTE) shows a compositional bias: basic and acidic residues. The LXXLL motif 5 signature appears at 2782–2786 (LNPLL). Positions 2818–2847 (KNKSDDLDSSKSVEIKEENSRVRDQEEKGG) are enriched in basic and acidic residues. A disordered region spans residues 2818–2885 (KNKSDDLDSS…SEDSDSSNED (68 aa)). K2833 is covalently cross-linked (Glycyl lysine isopeptide (Lys-Gly) (interchain with G-Cter in SUMO2)). The segment covering 2864–2876 (RASSGSDSSSSSS) has biased composition (low complexity).

Belongs to the SNF2/RAD54 helicase family. As to quaternary structure, interacts with PPARA. Probably interacts with ESR1 and NR1I3. Post-translationally, phosphorylated on serine and tyrosine residues. In terms of tissue distribution, expressed in osteoprogenitor cells during development and in mature bone (at protein level).

It is found in the cytoplasm. The protein localises to the nucleus. The enzyme catalyses ATP + H2O = ADP + phosphate + H(+). In terms of biological role, probable ATP-dependent chromatin-remodeling factor. Acts as a transcriptional coactivator for PPARA and possibly other nuclear receptors. Has DNA-dependent ATPase activity and binds to A/T-rich DNA. Associates with A/T-rich regulatory regions in promoters of genes that participate in the differentiation of progenitors during osteogenesis. In Mus musculus (Mouse), this protein is Chromodomain-helicase-DNA-binding protein 9 (Chd9).